The primary structure comprises 207 residues: Casparian strip membrane protein 1 (207 aa).

The span at 1–12 (MEGESTAVNITE) shows a compositional bias: polar residues. Residues 1-24 (MEGESTAVNITETPKERKGKAPLL) are disordered. Topologically, residues 1 to 48 (MEGESTAVNITETPKERKGKAPLLAPPPASGGIKTIVQKAPKGGYKRG) are cytoplasmic. Residues 49-69 (LAVFDVVLRIAGIAAALGAVI) form a helical membrane-spanning segment. The Extracellular portion of the chain corresponds to 70–98 (AMGSTDQTLPFFTQFFQFKAEFDDLPVFT). A helical transmembrane segment spans residues 99–119 (FFVIANAITAAYLALSIPISI). Residues 120–138 (VCIIRPHLVGPRVLLTFLD) are Cytoplasmic-facing. A helical transmembrane segment spans residues 139–159 (TVMVGLTTAAAGGAASIVYLA). Topologically, residues 160–184 (HNGNSDANWPAICQQFNDFCQEVSG) are extracellular. The helical transmembrane segment at 185–205 (AVVASFITVVVLMFLIVLSAF) threads the bilayer. At 206 to 207 (SL) the chain is on the cytoplasmic side.

This sequence belongs to the Casparian strip membrane proteins (CASP) family. Homodimer and heterodimers.

It is found in the cell membrane. Regulates membrane-cell wall junctions and localized cell wall deposition. Required for establishment of the Casparian strip membrane domain (CSD) and the subsequent formation of Casparian strips, a cell wall modification of the root endodermis that determines an apoplastic barrier between the intraorganismal apoplasm and the extraorganismal apoplasm and prevents lateral diffusion. The protein is Casparian strip membrane protein 1 of Taraxacum kok-saghyz (Russian dandelion).